Reading from the N-terminus, the 378-residue chain is uncharacterized protein (378 aa).

Positions 150 to 176 (TTTATTSNNRFNNNNSNNNNINNNNDN) are enriched in low complexity. The interval 150 to 187 (TTTATTSNNRFNNNNSNNNNINNNNDNNNKEQKKESRC) is disordered. Residues 177–187 (NNKEQKKESRC) are compositionally biased toward basic and acidic residues.

This is an uncharacterized protein from Dictyostelium discoideum (Social amoeba).